Here is a 1321-residue protein sequence, read N- to C-terminus: Bile salt export pump (1321 aa).

At 1 to 62 the chain is on the cytoplasmic side; the sequence is MSDSVILRSI…FSSSTDIWLM (62 aa). The segment at 16-37 is disordered; it reads ENDGFESDKSYNNDKKSRLQDE. Over residues 21 to 37 the composition is skewed to basic and acidic residues; that stretch reads ESDKSYNNDKKSRLQDE. The region spanning 62–385 is the ABC transmembrane type-1 1 domain; the sequence is MFVGSLCAFL…ASPCLEAFAT (324 aa). Residues 63 to 83 form a helical membrane-spanning segment; the sequence is FVGSLCAFLHGIAQPGVLLIF. Topologically, residues 84–147 are extracellular; it reads GTMTDVFIDY…MIKFASYYAG (64 aa). N-linked (GlcNAc...) asparagine glycosylation is found at Asn-109, Asn-116, Asn-122, and Asn-125. A helical transmembrane segment spans residues 148–168; that stretch reads IAVAVLITGYIQICFWVIAAA. Residues 169–215 lie on the Cytoplasmic side of the membrane; the sequence is RQIQKMRKFYFRRIMRMEIGWFDCNSVGELNTRFSDDINKINDAIAD. Residues 216–236 traverse the membrane as a helical segment; it reads QMALFIQRMTSTICGFLLGFF. Residues 237–240 lie on the Extracellular side of the membrane; that stretch reads RGWK. The helical transmembrane segment at 241–261 threads the bilayer; the sequence is LTLVIISVSPLIGIGAATIGL. Over 262–319 the chain is Cytoplasmic; it reads SVSKFTDYELKAYAKAGVVADEVISSMRTVAAFGGEKREVERYEKNLVFAQRWGIRKG. A helical transmembrane segment spans residues 320–340; sequence IVMGFFTGFVWCLIFLCYALA. At 341–353 the chain is on the extracellular side; sequence FWYGSTLVLDEGE. A helical transmembrane segment spans residues 354-374; the sequence is YTPGTLVQIFLSVIVGALNLG. Topologically, residues 375–755 are cytoplasmic; sequence NASPCLEAFA…KFSAPEWPYM (381 aa). The region spanning 420–656 is the ABC transporter 1 domain; sequence IEFHNVTFHY…KGVYFTLVTL (237 aa). 455-462 is an ATP binding site; the sequence is GPSGAGKS. Thr-586 carries the post-translational modification Phosphothreonine. The residue at position 587 (Ser-587) is a Phosphoserine. The segment at 651–672 is interaction with HAX1; the sequence is FTLVTLQSQGNQALNEEDIKDA. Phosphoserine occurs at positions 690, 701, and 704. In terms of domain architecture, ABC transmembrane type-1 2 spans 755-1043; that stretch reads MLVGSVGAAV…AFSYTPSYAK (289 aa). The chain crosses the membrane as a helical span at residues 756–776; it reads LVGSVGAAVNGTVTPLYAFLF. At 777 to 794 the chain is on the extracellular side; sequence SQILGTFSIPDKEEQRSQ. A helical membrane pass occupies residues 795 to 815; that stretch reads INGVCLLFVAMGCVSLFTQFL. Over 816-869 the chain is Cytoplasmic; it reads QGYAFAKSGELLTKRLRKFGFRAMLGQDIAWFDDLRNSPGALTTRLATDASQVQ. 2 consecutive transmembrane segments (helical) span residues 870 to 890 and 891 to 911; these read GAAG…TVAM and IIAF…FPFL. Residues 912–979 are Cytoplasmic-facing; that stretch reads ALSGATQTRM…PFKTAIQKAN (68 aa). Residues 980-1000 traverse the membrane as a helical segment; it reads IYGFCFAFAQCIMFIANSASY. Topologically, residues 1001–1011 are extracellular; sequence RYGGYLISNEG. A helical transmembrane segment spans residues 1012–1032; it reads LHFSYVFRVISAVVLSATALG. The Cytoplasmic portion of the chain corresponds to 1033 to 1321; the sequence is RAFSYTPSYA…KLVTTGSPIS (289 aa). The ABC transporter 2 domain maps to 1078-1316; the sequence is IDFVDCKFTY…KGAYYKLVTT (239 aa). 1113–1120 is a binding site for ATP; that stretch reads GSSGCGKS. Residue Ser-1214 is modified to Phosphoserine. The segment at 1311–1314 is mediates internalization from the plasma membrane; that stretch reads YKLV. Ser-1321 carries the post-translational modification Phosphoserine.

It belongs to the ABC transporter superfamily. ABCB family. Multidrug resistance exporter (TC 3.A.1.201) subfamily. In terms of assembly, interacts with HAX1. Interacts with the adapter protein complex 2 (AP-2) throught AP2A2 or AP2A1; this interaction regulates cell membrane expression of ABCB11 through its internalization in a clathrin-dependent manner and its subsequent degradation. In terms of processing, N-glycosylated. Post-translationally, ubiquitinated; short-chain ubiquitination regulates cell-Surface expression of ABCB11. As to expression, expressed predominantly, if not exclusively in the liver, where it was further localized to the canalicular microvilli and to subcanalicular vesicles of the hepatocytes by in situ.

The protein resides in the apical cell membrane. It localises to the recycling endosome membrane. Its subcellular location is the endosome. It is found in the cell membrane. It catalyses the reaction cholate(in) + ATP + H2O = cholate(out) + ADP + phosphate + H(+). The enzyme catalyses taurocholate(in) + ATP + H2O = taurocholate(out) + ADP + phosphate + H(+). It carries out the reaction glycocholate(in) + ATP + H2O = glycocholate(out) + ADP + phosphate + H(+). The catalysed reaction is glycochenodeoxycholate(in) + ATP + H2O = glycochenodeoxycholate(out) + ADP + phosphate + H(+). It catalyses the reaction taurochenodeoxycholate(in) + ATP + H2O = taurochenodeoxycholate(out) + ADP + phosphate + H(+). The enzyme catalyses glycoursodeoxycholate(in) + ATP + H2O = glycoursodeoxycholate(out) + ADP + phosphate + H(+). It carries out the reaction tauroursodeoxycholate(in) + ATP + H2O = tauroursodeoxycholate(out) + ADP + phosphate + H(+). The catalysed reaction is taurodeoxycholate(in) + ATP + H2O = taurodeoxycholate(out) + ADP + phosphate + H(+). It catalyses the reaction taurolithocholate 3-sulfate(in) + ATP + H2O = taurolithocholate 3-sulfate(out) + ADP + phosphate + H(+). The enzyme catalyses pravastatin(in) + ATP + H2O = pravastatin(out) + ADP + phosphate + H(+). The uptake of taurocholate is inhibited by taurolithocholate sulfate with an IC(50) of 9 uM. Pravastatin competitively inhibits the transport of taurocholic acid. Cyclosporin A, glibenclamide, rifampicin and troglitazonestrongly competitively inhibit the transport activity of taurocholate. The canalicular transport activity of taurocholate is strongly dependent on canalicular membrane cholesterol content. The uptake of taurocholate is increased by short- and medium-chain fatty acids. Cholesterol increases transport capacity of taurocholate without affecting the affinity for the substrate. Catalyzes the transport of the major hydrophobic bile salts, such as taurine and glycine-conjugated cholic acid across the canalicular membrane of hepatocytes in an ATP-dependent manner, therefore participates in hepatic bile acid homeostasis and consequently to lipid homeostasis through regulation of biliary lipid secretion in a bile salts dependent manner. Transports taurine-conjugated bile salts more rapidly than glycine-conjugated bile salts. Also transports non-bile acid compounds, such as pravastatin and fexofenadine in an ATP-dependent manner and may be involved in their biliary excretion. The polypeptide is Bile salt export pump (Homo sapiens (Human)).